A 461-amino-acid chain; its full sequence is Bifunctional protein GlmU (461 aa).

The pyrophosphorylase stretch occupies residues 1-230 (MSKIHAVVLA…PEETLGVNDR (230 aa)). UDP-N-acetyl-alpha-D-glucosamine-binding positions include 9–12 (LAAG), lysine 23, glutamine 73, 78–79 (GT), 101–103 (YGD), glycine 140, glutamate 155, asparagine 170, and asparagine 228. Aspartate 103 provides a ligand contact to Mg(2+). Asparagine 228 serves as a coordination point for Mg(2+). The segment at 231-251 (VQLSEAEAYMKKRIMTGHMRN) is linker. The N-acetyltransferase stretch occupies residues 252–461 (GVTIIDPTST…KMPRKGKKQS (210 aa)). Residues arginine 333 and lysine 351 each coordinate UDP-N-acetyl-alpha-D-glucosamine. Histidine 363 serves as the catalytic Proton acceptor. Residues tyrosine 366 and asparagine 377 each contribute to the UDP-N-acetyl-alpha-D-glucosamine site. Acetyl-CoA contacts are provided by residues 386 to 387 (NY), alanine 423, and arginine 440.

It in the N-terminal section; belongs to the N-acetylglucosamine-1-phosphate uridyltransferase family. This sequence in the C-terminal section; belongs to the transferase hexapeptide repeat family. In terms of assembly, homotrimer. The cofactor is Mg(2+).

It is found in the cytoplasm. The enzyme catalyses alpha-D-glucosamine 1-phosphate + acetyl-CoA = N-acetyl-alpha-D-glucosamine 1-phosphate + CoA + H(+). The catalysed reaction is N-acetyl-alpha-D-glucosamine 1-phosphate + UTP + H(+) = UDP-N-acetyl-alpha-D-glucosamine + diphosphate. The protein operates within nucleotide-sugar biosynthesis; UDP-N-acetyl-alpha-D-glucosamine biosynthesis; N-acetyl-alpha-D-glucosamine 1-phosphate from alpha-D-glucosamine 6-phosphate (route II): step 2/2. It participates in nucleotide-sugar biosynthesis; UDP-N-acetyl-alpha-D-glucosamine biosynthesis; UDP-N-acetyl-alpha-D-glucosamine from N-acetyl-alpha-D-glucosamine 1-phosphate: step 1/1. It functions in the pathway bacterial outer membrane biogenesis; LPS lipid A biosynthesis. Its function is as follows. Catalyzes the last two sequential reactions in the de novo biosynthetic pathway for UDP-N-acetylglucosamine (UDP-GlcNAc). The C-terminal domain catalyzes the transfer of acetyl group from acetyl coenzyme A to glucosamine-1-phosphate (GlcN-1-P) to produce N-acetylglucosamine-1-phosphate (GlcNAc-1-P), which is converted into UDP-GlcNAc by the transfer of uridine 5-monophosphate (from uridine 5-triphosphate), a reaction catalyzed by the N-terminal domain. This Brevibacillus brevis (strain 47 / JCM 6285 / NBRC 100599) protein is Bifunctional protein GlmU.